We begin with the raw amino-acid sequence, 224 residues long: Uridylate kinase (224 aa).

6-10 (KVTGK) is an ATP binding site. Gly41 serves as a coordination point for UMP. The ATP site is built by Gly42 and Arg46. UMP contacts are provided by residues Asp63 and 111–117 (FQPGQST). ATP contacts are provided by Thr137, Phe143, and Asp146.

The protein belongs to the UMP kinase family. As to quaternary structure, homohexamer.

Its subcellular location is the cytoplasm. It carries out the reaction UMP + ATP = UDP + ADP. It participates in pyrimidine metabolism; CTP biosynthesis via de novo pathway; UDP from UMP (UMPK route): step 1/1. Its activity is regulated as follows. Inhibited by UTP. Its function is as follows. Catalyzes the reversible phosphorylation of UMP to UDP. The polypeptide is Uridylate kinase (Metallosphaera sedula (strain ATCC 51363 / DSM 5348 / JCM 9185 / NBRC 15509 / TH2)).